Here is a 40-residue protein sequence, read N- to C-terminus: Dolichyl-diphosphooligosaccharide--protein glycosyltransferase subunit 4 (40 aa).

The Lumenal segment spans residues M1–D4. A helical transmembrane segment spans residues V5–Y25. The Cytoplasmic portion of the chain corresponds to H26–K40.

The protein belongs to the OST4 family. In terms of assembly, component of the oligosaccharyltransferase (OST) complex.

Its subcellular location is the endoplasmic reticulum membrane. Functionally, subunit of the oligosaccharyl transferase (OST) complex that catalyzes the initial transfer of a defined glycan (Glc(3)Man(9)GlcNAc(2) in eukaryotes) from the lipid carrier dolichol-pyrophosphate to an asparagine residue within an Asn-X-Ser/Thr consensus motif in nascent polypeptide chains, the first step in protein N-glycosylation. N-glycosylation occurs cotranslationally and the complex associates with the Sec61 complex at the channel-forming translocon complex that mediates protein translocation across the endoplasmic reticulum (ER). All subunits are required for a maximal enzyme activity. The chain is Dolichyl-diphosphooligosaccharide--protein glycosyltransferase subunit 4 from Drosophila virilis (Fruit fly).